Reading from the N-terminus, the 75-residue chain is uncharacterized protein (75 aa).

A signal peptide spans 1 to 21; that stretch reads MRLIVVSIMVTLLSGCGSIIS.

The protein to E.coli YidQ.

This is an uncharacterized protein from Escherichia coli O157:H7.